Reading from the N-terminus, the 502-residue chain is MTSATYIMALDLGTTGNRAILFDQDGQIVDQAYKELPQYYPQPGWVEHDALEIWRDTRWAMETVVTQAHIDPAQIAAIGLTVQRETCLLWDKTTGQPLHKAIVWQDRRTAAYCNQLAEQGHTQDIYDRTGLVLDAYFSGSKLAWLLTEVKRQNPNLNLDNVIAGTIDTWALWNLTGGKVHATDHSNASRTLLLNLSQGTWDDHLLDLFGIPKSFMPAIQPSLGIFGKTDTKFLGQEIPIAAIFGDQQAALFAHGCDRPGALKCTYGTGSFLVAHTGSNIARSKNRLLSTVAWTQTDKGQTQTGYAIEGSMFTSGACIQWLRDGLKLIANAAETEGLAQAVEDNGGVYFVPALSGLGAPHWDMSARGAFLGITRGAQREHMVRAVLEAIAFQTKEVVDAVNQDCGSPIQQLKVDGGACQNNFLMQYQADVLGIPVERPAVLDATAQGAAFGAGLAIGVWKDYAGLVAARKIDQVFKPGANAQTAQANFKTWQKAVERAKNWAD.

ADP is bound at residue Thr14. ATP contacts are provided by Thr14 and Thr15. Thr14 lines the sn-glycerol 3-phosphate pocket. Arg18 contributes to the ADP binding site. 4 residues coordinate sn-glycerol 3-phosphate: Arg84, Glu85, Tyr136, and Asp245. Residues Arg84, Glu85, Tyr136, Asp245, and Gln246 each coordinate glycerol. ADP contacts are provided by Thr267 and Gly314. ATP contacts are provided by Thr267, Gly314, Gln318, and Gly415. ADP-binding residues include Gly415 and Asn419.

It belongs to the FGGY kinase family.

It carries out the reaction glycerol + ATP = sn-glycerol 3-phosphate + ADP + H(+). It participates in polyol metabolism; glycerol degradation via glycerol kinase pathway; sn-glycerol 3-phosphate from glycerol: step 1/1. Inhibited by fructose 1,6-bisphosphate (FBP). Its function is as follows. Key enzyme in the regulation of glycerol uptake and metabolism. Catalyzes the phosphorylation of glycerol to yield sn-glycerol 3-phosphate. This Acaryochloris marina (strain MBIC 11017) protein is Glycerol kinase.